Reading from the N-terminus, the 588-residue chain is Acid beta-fructofuranosidase 1, vacuolar (588 aa).

The Cytoplasmic segment spans residues 1-31 (MDTSTSAYAPLPGEDPLFSGHPPASLRRSWK). Residues 1–115 (MDTSTSAYAP…LSYNWTNAMF (115 aa)) constitute a propeptide, removed in mature form. The chain crosses the membrane as a helical; Signal-anchor for type II membrane protein span at residues 32–52 (GFAVIFASVLFLLSLVGLIIH). Topologically, residues 53–588 (QGPQQPPDVM…LRALRKEVGR (536 aa)) are lumenal. The disordered stretch occupies residues 57–86 (QPPDVMPDKQDEHHHPQSTTPASETTASWE). The segment covering 62–71 (MPDKQDEHHH) has biased composition (basic and acidic residues). The segment covering 73–84 (QSTTPASETTAS) has biased composition (polar residues). Substrate is bound by residues 130–133 (WMND), Gln-149, and Trp-157. The active site involves Asp-133. N-linked (GlcNAc...) asparagine glycosylation occurs at Asn-159. 192–193 (WS) is a binding site for substrate. Residue Asn-226 is glycosylated (N-linked (GlcNAc...) asparagine). Substrate-binding positions include 256-257 (RD), Glu-311, and Asp-344. A disulfide bridge links Cys-499 with Cys-545.

The protein belongs to the glycosyl hydrolase 32 family. In terms of assembly, monomer. May be present in two forms, a 70 kDa monomer and a heterodimer of the 30 kDa and 38 kDa subunits. The ratio of the levels of the two forms within cells appears to be regulated developmentally. Post-translationally, glycosylated. Expressed in buds, stems, roots and leaves. Expressed in the epidermal cells of young leaves and of primordial leaves.

It is found in the membrane. Its subcellular location is the vacuole lumen. It carries out the reaction Hydrolysis of terminal non-reducing beta-D-fructofuranoside residues in beta-D-fructofuranosides.. Acidic vacuolar invertase involved in light-induced bud burst. The chain is Acid beta-fructofuranosidase 1, vacuolar from Rosa hybrid cultivar.